A 158-amino-acid polypeptide reads, in one-letter code: Transcription elongation factor GreA (158 aa).

This sequence belongs to the GreA/GreB family.

Necessary for efficient RNA polymerase transcription elongation past template-encoded arresting sites. The arresting sites in DNA have the property of trapping a certain fraction of elongating RNA polymerases that pass through, resulting in locked ternary complexes. Cleavage of the nascent transcript by cleavage factors such as GreA or GreB allows the resumption of elongation from the new 3'terminus. GreA releases sequences of 2 to 3 nucleotides. This chain is Transcription elongation factor GreA, found in Pseudomonas syringae pv. tomato (strain ATCC BAA-871 / DC3000).